The sequence spans 1187 residues: Non-receptor tyrosine-protein kinase TYK2 (1187 aa).

Residues 26-431 form the FERM domain; sequence GGLKVLLHWA…GYFRLTADSS (406 aa). At tyrosine 292 the chain carries Phosphotyrosine. The tract at residues 335–366 is disordered; it reads KEEGSSGSSGRNPQASLFGKKAKAHKAVGQPA. Residues 339 to 349 show a composition bias toward polar residues; the sequence is SSGSSGRNPQA. Residues 450–529 enclose the SH2; atypical domain; it reads GIHGPLLEPF…GRSFPSVREL (80 aa). Phosphoserine is present on residues serine 499 and serine 525. The region spanning 589 to 875 is the Protein kinase 1 domain; the sequence is ITQLSHLGQG…LTRLQPHNLA (287 aa). Tyrosine 604 bears the Phosphotyrosine mark. The tract at residues 610 to 629 is disordered; it reads VEGSGDPEEGKMDDEDPLVP. Positions 614-626 are enriched in acidic residues; that stretch reads GDPEEGKMDDEDP. Serine 884 is subject to Phosphoserine. In terms of domain architecture, Protein kinase 2 spans 897–1176; sequence LKKIRDLGEG…PILKTVHEKY (280 aa). Residues 903–911 and lysine 930 each bind ATP; that span reads LGEGHFGKV. Catalysis depends on aspartate 1023, which acts as the Proton acceptor. The residue at position 1054 (tyrosine 1054) is a Phosphotyrosine; by autocatalysis. Phosphotyrosine is present on tyrosine 1055.

This sequence belongs to the protein kinase superfamily. Tyr protein kinase family. JAK subfamily. Interacts (via FERM domain) with JAKMIP1. Interacts with PIK3R1; this interaction is important for cell migration. Interacts with MPL/TPOR. As to quaternary structure, (Microbial infection) Interacts with Epstein-Barr virus protein LMP1; this interaction inhibits TYK2-mediated interferon signaling. In terms of assembly, (Microbial infection) Interacts with papillomavirus-18 protein E6; this interaction impairs JAK-STAT activation by interferon-alpha. (Microbial infection) Interacts with Epstein-Barr virus (EBV) tegument protein BGLF2; this interaction participates in the inhibition of type I IFN signaling by the virus. In terms of processing, phosphorylated. Phosphorylation by JAK1 at Tyr-1054 and Tyr-1055 induces kinase activation. In terms of tissue distribution, observed in all cell lines analyzed. Expressed in a variety of lymphoid and non-lymphoid cell lines.

It catalyses the reaction L-tyrosyl-[protein] + ATP = O-phospho-L-tyrosyl-[protein] + ADP + H(+). With respect to regulation, the protein kinase 1 domain (also termed pseudokinase domain) mediates autoinhibition of the TYK2 kinase domain. In terms of biological role, tyrosine kinase of the non-receptor type involved in numerous cytokines and interferons signaling, which regulates cell growth, development, cell migration, innate and adaptive immunity. Plays both structural and catalytic roles in numerous interleukins and interferons (IFN-alpha/beta) signaling. Associates with heterodimeric cytokine receptor complexes and activates STAT family members including STAT1, STAT3, STAT4 or STAT6. The heterodimeric cytokine receptor complexes are composed of (1) a TYK2-associated receptor chain (IFNAR1, IL12RB1, IL10RB or IL13RA1), and (2) a second receptor chain associated either with JAK1 or JAK2. In response to cytokine-binding to receptors, phosphorylates and activates receptors (IFNAR1, IL12RB1, IL10RB or IL13RA1), creating docking sites for STAT members. In turn, recruited STATs are phosphorylated by TYK2 (or JAK1/JAK2 on the second receptor chain), form homo- and heterodimers, translocate to the nucleus, and regulate cytokine/growth factor responsive genes. Negatively regulates STAT3 activity by promototing phosphorylation at a specific tyrosine that differs from the site used for signaling. The chain is Non-receptor tyrosine-protein kinase TYK2 (TYK2) from Homo sapiens (Human).